Here is a 336-residue protein sequence, read N- to C-terminus: N-acetyl-gamma-glutamyl-phosphate reductase (336 aa).

Cys156 is a catalytic residue.

Belongs to the NAGSA dehydrogenase family. Type 1 subfamily.

The protein resides in the cytoplasm. The enzyme catalyses N-acetyl-L-glutamate 5-semialdehyde + phosphate + NADP(+) = N-acetyl-L-glutamyl 5-phosphate + NADPH + H(+). The protein operates within amino-acid biosynthesis; L-arginine biosynthesis; N(2)-acetyl-L-ornithine from L-glutamate: step 3/4. Its function is as follows. Catalyzes the NADPH-dependent reduction of N-acetyl-5-glutamyl phosphate to yield N-acetyl-L-glutamate 5-semialdehyde. This is N-acetyl-gamma-glutamyl-phosphate reductase from Moritella profunda.